Reading from the N-terminus, the 1098-residue chain is Probable DNA-directed RNA polymerase (1098 aa).

Positions 1-24 are enriched in basic and acidic residues; sequence PIRESVRVSTDRDPDLEDEKREQL. The interval 1 to 26 is disordered; sequence PIRESVRVSTDRDPDLEDEKREQLGE. Residues Asp-663, Lys-750, and Asp-915 contribute to the active site.

Belongs to the phage and mitochondrial RNA polymerase family.

It is found in the mitochondrion. The catalysed reaction is RNA(n) + a ribonucleoside 5'-triphosphate = RNA(n+1) + diphosphate. Functionally, DNA-dependent RNA polymerase catalyzes the transcription of DNA into RNA using the four ribonucleoside triphosphates as substrates. The sequence is that of Probable DNA-directed RNA polymerase from Zea mays (Maize).